Consider the following 584-residue polypeptide: Arginine--tRNA ligase (584 aa).

The 'HIGH' region motif lies at 130 to 140 (PNVAKEMHVGH).

The protein belongs to the class-I aminoacyl-tRNA synthetase family. In terms of assembly, monomer.

Its subcellular location is the cytoplasm. The enzyme catalyses tRNA(Arg) + L-arginine + ATP = L-arginyl-tRNA(Arg) + AMP + diphosphate. The sequence is that of Arginine--tRNA ligase from Protochlamydia amoebophila (strain UWE25).